The primary structure comprises 128 residues: MSSEKEAALRRLDDSPTIFDKIIKKEIPSTVVYEDEKVLAFRDINPQAPTHILIIPKVKDGLTGLAKAEERHIEILGYLLYVAKVVAKQEGLEDGYRVVINDGPSGCQSVYHIHVHLLGGRQMNWPPG.

One can recognise an HIT domain in the interval 18–128; it reads IFDKIIKKEI…GGRQMNWPPG (111 aa). A Histidine triad motif motif is present at residues 112–116; it reads HIHVH.

In terms of assembly, homodimer.

The polypeptide is 14 kDa zinc-binding protein (ZBP14) (Zea mays (Maize)).